The sequence spans 211 residues: LexA repressor (211 aa).

Positions 30 to 50 form a DNA-binding region, H-T-H motif; the sequence is RVEIAREIGFKSPNAAEEHLK. Active-site for autocatalytic cleavage activity residues include Ser-128 and Lys-165.

This sequence belongs to the peptidase S24 family. Homodimer.

The enzyme catalyses Hydrolysis of Ala-|-Gly bond in repressor LexA.. Functionally, represses a number of genes involved in the response to DNA damage (SOS response), including recA and lexA. In the presence of single-stranded DNA, RecA interacts with LexA causing an autocatalytic cleavage which disrupts the DNA-binding part of LexA, leading to derepression of the SOS regulon and eventually DNA repair. The sequence is that of LexA repressor from Haemophilus ducreyi (strain 35000HP / ATCC 700724).